A 95-amino-acid polypeptide reads, in one-letter code: Glutamyl-tRNA(Gln) amidotransferase subunit C 1 (95 aa).

Belongs to the GatC family. As to quaternary structure, heterotrimer of A, B and C subunits.

It carries out the reaction L-glutamyl-tRNA(Gln) + L-glutamine + ATP + H2O = L-glutaminyl-tRNA(Gln) + L-glutamate + ADP + phosphate + H(+). It catalyses the reaction L-aspartyl-tRNA(Asn) + L-glutamine + ATP + H2O = L-asparaginyl-tRNA(Asn) + L-glutamate + ADP + phosphate + 2 H(+). Allows the formation of correctly charged Asn-tRNA(Asn) or Gln-tRNA(Gln) through the transamidation of misacylated Asp-tRNA(Asn) or Glu-tRNA(Gln) in organisms which lack either or both of asparaginyl-tRNA or glutaminyl-tRNA synthetases. The reaction takes place in the presence of glutamine and ATP through an activated phospho-Asp-tRNA(Asn) or phospho-Glu-tRNA(Gln). This is Glutamyl-tRNA(Gln) amidotransferase subunit C 1 (gatC1) from Clostridium acetobutylicum (strain ATCC 824 / DSM 792 / JCM 1419 / IAM 19013 / LMG 5710 / NBRC 13948 / NRRL B-527 / VKM B-1787 / 2291 / W).